The sequence spans 502 residues: MAISFLCVFLITFVSLIFFAKKIKRSKWNLPPSPPKFPVIGNLHQIGELPHRSLQHLAERYGPVMLLHFGFVPITVVSSREAAEEVLRTHDLDCCSRPKLVGTRLLSRDFKDIGFTPYGNEWKARRKFALRELFCLKKVQSFRHIREEECNFLVKQLSESAVDRSPVDLSKSLFWLTASILFRVALGQNFHESDFIDKEKIEELVFEAETALASFTCSDFFPVAGLGWLVDWFSGQHKRLNDVFYKLDALFQHVIDDHLNPGRSKEHEDIIDSMLDVIHKQGEDSSLELTIDHIKGFLANIFLAGIDTGAITMIWAVTELVKNPKLIKKVQGDIREQLGSNKERITEEDIEKVPYLKMVIKETFRLHPAAPLILPRETMAHIKVQGYDIPPKRRILVNVSAIGRDPKLWTNPKEFDPERFMDSFVDYRGQHYELLPFGSGRRICPGMPMGIAAVELGLLNLLYFFDWKLPDGMTHKDIDTEEAGTLTIVKKVPLKLVPVRVQ.

Residues 1–21 (MAISFLCVFLITFVSLIFFAK) traverse the membrane as a helical segment. Residue C444 participates in heme binding.

This sequence belongs to the cytochrome P450 family. It depends on heme as a cofactor.

It localises to the membrane. The chain is Cytochrome P450 71B19 (CYP71B19) from Arabidopsis thaliana (Mouse-ear cress).